The chain runs to 185 residues: Photosystem I assembly protein Ycf4 (185 aa).

The next 2 membrane-spanning stretches (helical) occupy residues 24-44 and 66-86; these read YLIG…SISS and IIMG…WYLV.

This sequence belongs to the Ycf4 family.

It localises to the cellular thylakoid membrane. Seems to be required for the assembly of the photosystem I complex. The polypeptide is Photosystem I assembly protein Ycf4 (Prochlorococcus marinus (strain MIT 9515)).